Reading from the N-terminus, the 522-residue chain is N-acetylgalactosamine-6-sulfatase (522 aa).

The N-terminal stretch at 1-26 (MAAVVAATRWWQLLLVLSAAGMGASG) is a signal peptide. The tract at residues 27-379 (APQPPNILLL…PTLLQGRLMD (353 aa)) is catalytic domain. Positions 39, 40, and 79 each coordinate Ca(2+). Cys-79 serves as the catalytic Nucleophile. Residue Cys-79 is modified to 3-oxoalanine (Cys). The active site involves His-142. N-linked (GlcNAc...) asparagine glycosylation is present at Asn-204. Asp-288 and Asn-289 together coordinate Ca(2+). A disulfide bridge links Cys-308 with Cys-419. N-linked (GlcNAc...) asparagine glycosylation is present at Asn-423. 2 disulfide bridges follow: Cys-489–Cys-518 and Cys-501–Cys-507.

Belongs to the sulfatase family. As to quaternary structure, homodimer. The cofactor is Ca(2+). The conversion to 3-oxoalanine (also known as C-formylglycine, FGly), of a serine or cysteine residue in prokaryotes and of a cysteine residue in eukaryotes, is critical for catalytic activity.

It is found in the lysosome. The enzyme catalyses Hydrolysis of the 6-sulfate groups of the N-acetyl-D-galactosamine 6-sulfate units of chondroitin sulfate and of the D-galactose 6-sulfate units of keratan sulfate.. This chain is N-acetylgalactosamine-6-sulfatase (GALNS), found in Homo sapiens (Human).